A 969-amino-acid chain; its full sequence is Putative zinc protease mug138 (969 aa).

Position 68 (His-68) interacts with Zn(2+). Glu-71 functions as the Proton acceptor in the catalytic mechanism. Residues His-72 and Glu-149 each coordinate Zn(2+).

This sequence belongs to the peptidase M16 family.

The protein resides in the cytoplasm. Functionally, has a role in meiosis. This Schizosaccharomyces pombe (strain 972 / ATCC 24843) (Fission yeast) protein is Putative zinc protease mug138 (mug138).